The following is an 837-amino-acid chain: Translation initiation factor IF-2 (837 aa).

The segment at 94-252 (QRSPEEIEAE…NAHGFQSPTG (159 aa)) is disordered. The segment covering 96-136 (SPEEIEAERKRELDERRAVENAARQKAEEEARVRAEEEARR) has biased composition (basic and acidic residues). Residues 137–171 (QPAAPSAPAEAVAAPAPVAEPVREAAPVVAAAPAA) are compositionally biased toward low complexity. 2 stretches are compositionally biased toward basic and acidic residues: residues 172-213 (DTRK…EKAP) and 221-230 (TTDEESDGFR). Basic residues predominate over residues 231–244 (RGGRGKAKLKKRNA). In terms of domain architecture, tr-type G spans 337–506 (PRAPVVTVMG…LLQAEVLELT (170 aa)). The segment at 346–353 (GHVDHGKT) is G1. 346–353 (GHVDHGKT) is a GTP binding site. The interval 371–375 (GITQH) is G2. Residues 392–395 (DTPG) are G3. GTP-binding positions include 392–396 (DTPGH) and 446–449 (NKID). Residues 446–449 (NKID) form a G4 region. Residues 482–484 (SAK) are G5.

It belongs to the TRAFAC class translation factor GTPase superfamily. Classic translation factor GTPase family. IF-2 subfamily.

The protein resides in the cytoplasm. In terms of biological role, one of the essential components for the initiation of protein synthesis. Protects formylmethionyl-tRNA from spontaneous hydrolysis and promotes its binding to the 30S ribosomal subunits. Also involved in the hydrolysis of GTP during the formation of the 70S ribosomal complex. The protein is Translation initiation factor IF-2 of Pseudomonas fluorescens (strain Pf0-1).